The primary structure comprises 209 residues: uncharacterized protein (209 aa).

The Nudix hydrolase domain occupies 1–167 (MRNSAGLFMI…LNTYASSNYG (167 aa)).

This is an uncharacterized protein from Orgyia pseudotsugata (Douglas-fir tussock moth).